The sequence spans 555 residues: Lysine--tRNA ligase (555 aa).

Positions 37–45 (TSGRLHVGN) match the 'HIGH' region motif. Positions 301-305 (AMSSS) match the 'KMSKS' region motif.

It belongs to the class-I aminoacyl-tRNA synthetase family.

It is found in the cytoplasm. The enzyme catalyses tRNA(Lys) + L-lysine + ATP = L-lysyl-tRNA(Lys) + AMP + diphosphate. The chain is Lysine--tRNA ligase from Methanopyrus kandleri (strain AV19 / DSM 6324 / JCM 9639 / NBRC 100938).